Reading from the N-terminus, the 45-residue chain is Large ribosomal subunit protein bL34 (45 aa).

The tract at residues 23–45 (ETPGGKKVLSARRAKGRKNLIAK) is disordered. The span at 31–45 (LSARRAKGRKNLIAK) shows a compositional bias: basic residues.

The protein belongs to the bacterial ribosomal protein bL34 family.

This is Large ribosomal subunit protein bL34 from Elusimicrobium minutum (strain Pei191).